A 215-amino-acid polypeptide reads, in one-letter code: Ribosomal RNA small subunit methyltransferase G (215 aa).

Residues Gly71, Leu76, and Arg135 each contribute to the S-adenosyl-L-methionine site.

The protein belongs to the methyltransferase superfamily. RNA methyltransferase RsmG family.

Its subcellular location is the cytoplasm. Functionally, specifically methylates the N7 position of a guanine in 16S rRNA. This Salinibacter ruber (strain DSM 13855 / M31) protein is Ribosomal RNA small subunit methyltransferase G.